A 216-amino-acid polypeptide reads, in one-letter code: Probable transaldolase (216 aa).

The active-site Schiff-base intermediate with substrate is K83.

The protein belongs to the transaldolase family. Type 3B subfamily.

It localises to the cytoplasm. It catalyses the reaction D-sedoheptulose 7-phosphate + D-glyceraldehyde 3-phosphate = D-erythrose 4-phosphate + beta-D-fructose 6-phosphate. Its pathway is carbohydrate degradation; pentose phosphate pathway; D-glyceraldehyde 3-phosphate and beta-D-fructose 6-phosphate from D-ribose 5-phosphate and D-xylulose 5-phosphate (non-oxidative stage): step 2/3. In terms of biological role, transaldolase is important for the balance of metabolites in the pentose-phosphate pathway. In Thermoanaerobacter sp. (strain X514), this protein is Probable transaldolase.